Consider the following 465-residue polypeptide: Phenylalanine--tRNA ligase alpha subunit (465 aa).

Residues Thr-309, 348-350, and Phe-388 contribute to the L-phenylalanine site; that span reads QLD. Position 390 (Glu-390) interacts with Mg(2+).

It belongs to the class-II aminoacyl-tRNA synthetase family. Phe-tRNA synthetase alpha subunit type 2 subfamily. Tetramer of two alpha and two beta subunits. Mg(2+) serves as cofactor.

The protein resides in the cytoplasm. It carries out the reaction tRNA(Phe) + L-phenylalanine + ATP = L-phenylalanyl-tRNA(Phe) + AMP + diphosphate + H(+). The polypeptide is Phenylalanine--tRNA ligase alpha subunit (Sulfolobus acidocaldarius (strain ATCC 33909 / DSM 639 / JCM 8929 / NBRC 15157 / NCIMB 11770)).